Here is a 576-residue protein sequence, read N- to C-terminus: V-type ATP synthase alpha chain (576 aa).

238–245 provides a ligand contact to ATP; it reads GPFGAGKT.

It belongs to the ATPase alpha/beta chains family.

The catalysed reaction is ATP + H2O + 4 H(+)(in) = ADP + phosphate + 5 H(+)(out). Functionally, produces ATP from ADP in the presence of a proton gradient across the membrane. The V-type alpha chain is a catalytic subunit. This is V-type ATP synthase alpha chain from Borrelia turicatae (strain 91E135).